Consider the following 755-residue polypeptide: Xaa-Pro dipeptidyl-peptidase (755 aa).

Catalysis depends on charge relay system residues S348, D468, and H498.

It belongs to the peptidase S15 family. As to quaternary structure, homodimer.

Its subcellular location is the cytoplasm. The enzyme catalyses Hydrolyzes Xaa-Pro-|- bonds to release unblocked, N-terminal dipeptides from substrates including Ala-Pro-|-p-nitroanilide and (sequentially) Tyr-Pro-|-Phe-Pro-|-Gly-Pro-|-Ile.. Removes N-terminal dipeptides sequentially from polypeptides having unsubstituted N-termini provided that the penultimate residue is proline. This is Xaa-Pro dipeptidyl-peptidase from Streptococcus thermophilus.